A 237-amino-acid polypeptide reads, in one-letter code: Protein CUSTOS (237 aa).

Disordered regions lie at residues 1 to 23 (MAAPRRGTQKSDSDSSDEDLDRF), 50 to 69 (LRVRPDCHEHDGNELQTTPE), and 97 to 237 (ISKA…LGNE). Positions 52–62 (VRPDCHEHDGN) are enriched in basic and acidic residues. Positions 162–177 (STLQQEPQSTPSNVCD) are enriched in polar residues. Residues 181-190 (PKKKRKKKKK) show a composition bias toward basic residues. The short motif at 182–190 (KKKRKKKKK) is the Nucleolar localization signal (NLS1) element. Composition is skewed to basic and acidic residues over residues 203–216 (ETMHIEPGKNELQA) and 225–237 (KLEMAHCDELGNE). The short motif at 217 to 225 (KRKKKKKQK) is the Nucleolar localization signal (NLS2) element.

This sequence belongs to the CUSTOS family. Interacts (via NLS1 and NLS2) with dvl2; the interaction is negatively regulated by Wnt stimulation. Interacts with csnk1a1. Interacts with ctnnb1; the interaction is positively regulated by Wnt stimulation. Post-translationally, phosphorylated by ck1/csnk1a1.

It is found in the nucleus envelope. Essential for Spemann-Mangold organizer formation and subsequent anterior head development in the embryo. Inhibits canonical Wnt signaling pathway by antagonizing nuclear import of beta-catenin (ctnnb1) during embryogenesis. This Xenopus laevis (African clawed frog) protein is Protein CUSTOS.